We begin with the raw amino-acid sequence, 1476 residues long: Copper-transporting ATPase 1 (1476 aa).

Topologically, residues 1–642 are cytoplasmic; the sequence is MEPSMDVNSV…HKREIKQWRS (642 aa). HMA domains follow at residues 8–74 and 85–151; these read NSVT…FDAL and TDTL…LETG. The Cu(+) site is built by Thr18, Cys19, and Cys22. Thr152 bears the Phosphothreonine mark. HMA domains are found at residues 171–237 and 276–342; these read VVLK…FPAF and STAT…PGQY. Cu(+) is bound by residues Cys182, Cys185, Cys287, and Cys290. Thr326 carries the post-translational modification Phosphothreonine. Ser338, Ser352, Ser356, and Ser361 each carry phosphoserine. HMA domains lie at 376–442, 478–544, and 554–620; these read QETV…FDAV, SKCY…FGAT, and GILK…FEAS. Cu(+)-binding residues include Cys387, Cys390, Cys489, Cys492, Cys565, and Cys568. The helical transmembrane segment at 643 to 665 threads the bilayer; sequence SFLVSLFFCTPVMGLMMYMMAME. N-linked (GlcNAc...) asparagine glycans are attached at residues Asn674 and Asn685. The next 3 helical transmembrane spans lie at 695–717, 736–760, and 770–788; these read ILPG…QFFG, MDVL…VAMY, and SFDT…RWLE. N-linked (GlcNAc...) asparagine glycosylation is present at Asn887. A helical transmembrane segment spans residues 930 to 952; that stretch reads YFVPFIVLVSIATLLVWIIIGFQ. Asn953 carries N-linked (GlcNAc...) asparagine glycosylation. Residues 978-998 form a helical membrane-spanning segment; sequence AFQASITVLCIACPCSLGLAT. The active-site 4-aspartylphosphate intermediate is the Asp1034. Asn1130 and Asn1134 each carry an N-linked (GlcNAc...) asparagine glycan. A run of 2 helical transmembrane segments spans residues 1347–1373 and 1379–1397; these read INFL…IGLV and GSAA…SLFL. Residues Ser1420 and Ser1422 each carry the phosphoserine modification. Asn1448 carries N-linked (GlcNAc...) asparagine glycosylation. Phosphoserine is present on residues Ser1450, Ser1453, Ser1456, Ser1459, Ser1463, Ser1466, and Ser1476.

It belongs to the cation transport ATPase (P-type) (TC 3.A.3) family. In terms of assembly, monomer. Interacts with PDZD11. Interacts with ATOX1 and COMMD1. Interacts with TYRP1. Directly interacts with SOD3; this interaction is copper-dependent and is required for SOD3 activity. In terms of tissue distribution, expressed in most tissues except liver.

It localises to the golgi apparatus. The protein resides in the trans-Golgi network membrane. It is found in the cell membrane. It carries out the reaction Cu(+)(in) + ATP + H2O = Cu(+)(out) + ADP + phosphate + H(+). May function in the export of copper from the cytoplasm to an intracellular organelle. It may serve as well for the export of other metals. In Cricetulus griseus (Chinese hamster), this protein is Copper-transporting ATPase 1 (ATP7A).